The primary structure comprises 542 residues: MAAKEVKFQTDARERMLRGVDVLANAVKVTLGPKGRNVVIDKSFGAPRITKDGVSVAKEIELEDKFENMGAQMLREVASRTNDLAGDGTTTATVLAQAIVREGAKAVASGMNPMDLKRGIDLAVDAVVKELKNNARKISKNSEIAQVGTISANGDTEIGRYLAEAMEKVGNEGVITVEEAKTAETELEVVEGMQFDRGYLSPYFITNQDKMRVELEDPYILIHEKKLSNLQAMLPVLEAVVQSGKPLLIIAEDVEGEALATLVVNKLRGGLKVAAVKAPGFGDRRKAMLEDIAILTGGTVVSEDLGIKLESVTLDMLGRAKKVSIEKENTTIIDGAGSKADIEGRTAQIRAQIEETTSDYDREKLQERLAKLAGGVAVIRVGGSTEVEVKEKKDRVDDALHATRAAVEEGILPGGGVALLRAVKALDGLKTANNDQRVGVDLVRRAIEAPVRQIAENAGAEGSIIVGKLREKTEFSYGWNAQTNEYGDLYAMGVIDPAKVVRTALQDAASVAGLLVTTEAMIAEKPKKEAAPALPAGGGMDF.

ATP contacts are provided by residues 30 to 33 (TLGP), lysine 51, 87 to 91 (DGTTT), glycine 415, and aspartate 496.

It belongs to the chaperonin (HSP60) family. Forms a cylinder of 14 subunits composed of two heptameric rings stacked back-to-back. Interacts with the co-chaperonin GroES.

The protein resides in the cytoplasm. The catalysed reaction is ATP + H2O + a folded polypeptide = ADP + phosphate + an unfolded polypeptide.. Together with its co-chaperonin GroES, plays an essential role in assisting protein folding. The GroEL-GroES system forms a nano-cage that allows encapsulation of the non-native substrate proteins and provides a physical environment optimized to promote and accelerate protein folding. This chain is Chaperonin GroEL 5, found in Rhizobium meliloti (strain 1021) (Ensifer meliloti).